We begin with the raw amino-acid sequence, 251 residues long: Imidazole glycerol phosphate synthase subunit HisF (251 aa).

Active-site residues include aspartate 11 and aspartate 130.

It belongs to the HisA/HisF family. In terms of assembly, heterodimer of HisH and HisF.

It localises to the cytoplasm. It carries out the reaction 5-[(5-phospho-1-deoxy-D-ribulos-1-ylimino)methylamino]-1-(5-phospho-beta-D-ribosyl)imidazole-4-carboxamide + L-glutamine = D-erythro-1-(imidazol-4-yl)glycerol 3-phosphate + 5-amino-1-(5-phospho-beta-D-ribosyl)imidazole-4-carboxamide + L-glutamate + H(+). It functions in the pathway amino-acid biosynthesis; L-histidine biosynthesis; L-histidine from 5-phospho-alpha-D-ribose 1-diphosphate: step 5/9. Functionally, IGPS catalyzes the conversion of PRFAR and glutamine to IGP, AICAR and glutamate. The HisF subunit catalyzes the cyclization activity that produces IGP and AICAR from PRFAR using the ammonia provided by the HisH subunit. This is Imidazole glycerol phosphate synthase subunit HisF from Chlorobaculum parvum (strain DSM 263 / NCIMB 8327) (Chlorobium vibrioforme subsp. thiosulfatophilum).